A 162-amino-acid polypeptide reads, in one-letter code: MLQPGNYSLVLSLQFLLLLFDLFVNSFSELLRDPPVNQLVLFILQDVGILFAAIVLFLMLFNTFVFQAGLVSLLCQRFQVTVILCAVYIALSISLHVWLMNLRWTGANRFVWSDGLLALFVLQRFVAVLYFYYYKRTALSMGDSRFYHDSLWLRKEFARVRG.

N-linked (GlcNAc...) asparagine glycosylation is present at Asn6. The next 4 helical transmembrane spans lie at 7 to 27 (YSLV…VNSF), 41 to 61 (LFIL…LMLF), 80 to 100 (VTVI…VWLM), and 110 to 130 (FVWS…AVLY).

Belongs to the TMEM138 family.

Its subcellular location is the vacuole membrane. It localises to the cell projection. The protein localises to the cilium. In terms of biological role, required for ciliogenesis. The sequence is that of Transmembrane protein 138 (tmem138) from Xenopus tropicalis (Western clawed frog).